We begin with the raw amino-acid sequence, 156 residues long: uncharacterized protein (156 aa).

A compositionally biased stretch (polar residues) spans 1-12 (MSSRFARSNGNP). Residues 1–27 (MSSRFARSNGNPNHIRKRNHSPDPIGI) are disordered. Ser21 carries the phosphoserine modification.

The protein localises to the cytoplasm. It is found in the nucleus. This is an uncharacterized protein from Saccharomyces cerevisiae (strain ATCC 204508 / S288c) (Baker's yeast).